The following is a 101-amino-acid chain: Urease subunit beta (101 aa).

Belongs to the urease beta subunit family. Heterotrimer of UreA (gamma), UreB (beta) and UreC (alpha) subunits. Three heterotrimers associate to form the active enzyme.

The protein localises to the cytoplasm. It catalyses the reaction urea + 2 H2O + H(+) = hydrogencarbonate + 2 NH4(+). The protein operates within nitrogen metabolism; urea degradation; CO(2) and NH(3) from urea (urease route): step 1/1. This Paraburkholderia phytofirmans (strain DSM 17436 / LMG 22146 / PsJN) (Burkholderia phytofirmans) protein is Urease subunit beta.